Reading from the N-terminus, the 291-residue chain is Elongation factor Ts (291 aa).

The interval 80–83 (TDFV) is involved in Mg(2+) ion dislocation from EF-Tu.

This sequence belongs to the EF-Ts family.

It localises to the cytoplasm. Associates with the EF-Tu.GDP complex and induces the exchange of GDP to GTP. It remains bound to the aminoacyl-tRNA.EF-Tu.GTP complex up to the GTP hydrolysis stage on the ribosome. The polypeptide is Elongation factor Ts (Acinetobacter baylyi (strain ATCC 33305 / BD413 / ADP1)).